The chain runs to 261 residues: Dienlactone hydrolase 1 (261 aa).

Active-site residues include Cys147, Asp194, and His226.

The protein belongs to the dienelactone hydrolase family.

It participates in xenobiotic degradation. Dienlactone hydrolase; part of the Fusarium detoxification of benzoxazolinone cluster 1 (FDB1) involved in the degradation of benzoxazolinones produced by the host plant. Maize, wheat, and rye produce the 2 benzoxazinone phytoanticipins 2,4-dihy-droxy-7-methoxy-1,4-benzoxazin-3-one (DIMBOA) and 2,4-dihydroxy-1,4-benzoxazin-3-one (DIBOA) that, due to their inherent instability once released, spontaneously degrade to the more stable corresponding benzoxazolinones, 6-methoxy-2-benzoxazolinone (MBOA) and 2-benzoxazolinone (BOA), respectively. The first step in the detoxification of benzoxazolinones involves the hydrolysis of the cyclic ester bond of benzoxazolinones by the FDB1 cluster gamma-lactamase MBL1 to aminophenols. MBL1 is able to convert BOA into 2-aminophenol (2-AP), as well as MBOA into 5-methoxy-2-aminophenol (2-AMP). The FDB2 cluster N-malonyltransferase FDB2/NAT1 then metabolizes aminophenols via N-malonylation to non-toxic malonamic acids. FDB2/NAT1 converts 2-AP into N-(2-hydroxyphenyl) malonamic acid (HPMA) and 2-AMP into N-(2-hydroxy-4-methoxyphenyl) malonamic acid (HMPMA). The duplicated dienlactone hydrolases DLH1 and DLH2 may provide redundant function for hydrolyzing the lactone moiety in the BOA molecule. The roles of the amidases and other enzymes encoded by the 2 FDB clusters have not been identified so far. The chain is Dienlactone hydrolase 1 from Gibberella moniliformis (strain M3125 / FGSC 7600) (Maize ear and stalk rot fungus).